Consider the following 1700-residue polypeptide: Probable serine/threonine-protein kinase ifkC (1700 aa).

Residues 1-25 (MPPKPKQKAKQPSQQPPPPPPPAAA) form a disordered region. A compositionally biased stretch (pro residues) spans 14 to 23 (QQPPPPPPPA). Positions 74-197 (MELEALQAIF…EIAKDFLNEN (124 aa)) constitute an RWD domain. Residues 454–463 (GLKKSPSTFE) show a composition bias toward polar residues. The disordered stretch occupies residues 454–488 (GLKKSPSTFEYSGEGGGGGVGGGSSQKTINPHQQS). The segment covering 466–477 (GEGGGGGVGGGS) has biased composition (gly residues). Polar residues predominate over residues 479 to 488 (QKTINPHQQS). Residues 494-1027 (FEEIQLLGRG…AQQLLQSELM (534 aa)) enclose the Protein kinase domain. ATP is bound by residues 500 to 508 (LGRGGFGQV) and lysine 523. 2 disordered regions span residues 568–639 (LTND…ENND) and 689–760 (GNNT…SSSK). Positions 572–639 (NSDDDDDDDD…SEFESEENND (68 aa)) are enriched in acidic residues. The span at 697–735 (SSNQHLQQQQQQNQSQQQKKQPQQNQSQQQKKLKNSNSK) shows a compositional bias: low complexity. Residues 736–752 (SKSKSKSKSKSKSKSNS) show a composition bias toward basic residues. Aspartate 822 (proton acceptor) is an active-site residue. 4 stretches are compositionally biased toward low complexity: residues 850-875 (TSTL…SSNS), 1135-1158 (NNSS…NTNS), 1230-1240 (SSNGNSNNNNS), and 1509-1531 (NNSN…SYNN). Disordered regions lie at residues 850-901 (TSTL…EVEG), 1134-1160 (FNNS…NSVV), 1216-1253 (KHHH…SNTT), and 1507-1531 (NLNN…SYNN).

The protein belongs to the protein kinase superfamily. Ser/Thr protein kinase family. GCN2 subfamily.

It carries out the reaction L-seryl-[protein] + ATP = O-phospho-L-seryl-[protein] + ADP + H(+). It catalyses the reaction L-threonyl-[protein] + ATP = O-phospho-L-threonyl-[protein] + ADP + H(+). In Dictyostelium discoideum (Social amoeba), this protein is Probable serine/threonine-protein kinase ifkC (ifkC).